We begin with the raw amino-acid sequence, 418 residues long: Serine hydroxymethyltransferase (418 aa).

Residues Leu120 and 124-126 (GHL) contribute to the (6S)-5,6,7,8-tetrahydrofolate site. Lys229 carries the post-translational modification N6-(pyridoxal phosphate)lysine. Position 353-355 (353-355 (SPF)) interacts with (6S)-5,6,7,8-tetrahydrofolate.

This sequence belongs to the SHMT family. In terms of assembly, homodimer. Pyridoxal 5'-phosphate serves as cofactor.

The protein localises to the cytoplasm. It catalyses the reaction (6R)-5,10-methylene-5,6,7,8-tetrahydrofolate + glycine + H2O = (6S)-5,6,7,8-tetrahydrofolate + L-serine. It participates in one-carbon metabolism; tetrahydrofolate interconversion. It functions in the pathway amino-acid biosynthesis; glycine biosynthesis; glycine from L-serine: step 1/1. In terms of biological role, catalyzes the reversible interconversion of serine and glycine with tetrahydrofolate (THF) serving as the one-carbon carrier. This reaction serves as the major source of one-carbon groups required for the biosynthesis of purines, thymidylate, methionine, and other important biomolecules. Also exhibits THF-independent aldolase activity toward beta-hydroxyamino acids, producing glycine and aldehydes, via a retro-aldol mechanism. The chain is Serine hydroxymethyltransferase from Psychrobacter sp. (strain PRwf-1).